A 309-amino-acid polypeptide reads, in one-letter code: tRNA N6-adenosine threonylcarbamoyltransferase (309 aa).

Residues His108 and His112 each coordinate Fe cation. Residues 130-134 (LVSGG), Asp163, Gly176, Asp180, and Asn269 contribute to the substrate site. Asp293 contacts Fe cation.

Belongs to the KAE1 / TsaD family. Fe(2+) serves as cofactor.

The protein resides in the cytoplasm. It catalyses the reaction L-threonylcarbamoyladenylate + adenosine(37) in tRNA = N(6)-L-threonylcarbamoyladenosine(37) in tRNA + AMP + H(+). Required for the formation of a threonylcarbamoyl group on adenosine at position 37 (t(6)A37) in tRNAs that read codons beginning with adenine. Is involved in the transfer of the threonylcarbamoyl moiety of threonylcarbamoyl-AMP (TC-AMP) to the N6 group of A37, together with TsaE and TsaB. TsaD likely plays a direct catalytic role in this reaction. The protein is tRNA N6-adenosine threonylcarbamoyltransferase of Mycoplasmopsis agalactiae (strain NCTC 10123 / CIP 59.7 / PG2) (Mycoplasma agalactiae).